The sequence spans 601 residues: Casbene synthase, chloroplastic (601 aa).

The N-terminal 56 residues, 1 to 56 (MALPSAAMQSNPEKLNLFHRLSSLPTTSLEYGNNRFPFFSSSAKSHFKKPTQACLS), are a transit peptide targeting the chloroplast. The Mg(2+) site is built by Asp-355, Asp-359, Asn-499, Ser-503, and Glu-507. Residues 355 to 359 (DDTID) carry the DDXXD motif motif.

The protein belongs to the terpene synthase family. The cofactor is Mg(2+).

The protein resides in the plastid. The protein localises to the chloroplast. It catalyses the reaction (2E,6E,10E)-geranylgeranyl diphosphate = casbene + diphosphate. In terms of biological role, catalyzes the cyclization of geranylgeranyl diphosphate to casbene, a diterpene phytoalexin with antibacterial and antifungal activity. The polypeptide is Casbene synthase, chloroplastic (Ricinus communis (Castor bean)).